The primary structure comprises 1242 residues: ATP-dependent helicase/nuclease subunit A (1242 aa).

Residues S12–R487 form the UvrD-like helicase ATP-binding domain. ATP is bound at residue A33–T40. The UvrD-like helicase C-terminal domain occupies A514–G808.

It belongs to the helicase family. AddA subfamily. As to quaternary structure, heterodimer of AddA and AddB/RexB. The cofactor is Mg(2+).

It carries out the reaction Couples ATP hydrolysis with the unwinding of duplex DNA by translocating in the 3'-5' direction.. The catalysed reaction is ATP + H2O = ADP + phosphate + H(+). In terms of biological role, the heterodimer acts as both an ATP-dependent DNA helicase and an ATP-dependent, dual-direction single-stranded exonuclease. Recognizes the chi site generating a DNA molecule suitable for the initiation of homologous recombination. The AddA nuclease domain is required for chi fragment generation; this subunit has the helicase and 3' -&gt; 5' nuclease activities. This chain is ATP-dependent helicase/nuclease subunit A, found in Geobacillus kaustophilus (strain HTA426).